We begin with the raw amino-acid sequence, 114 residues long: Large ribosomal subunit protein uL22 (114 aa).

This sequence belongs to the universal ribosomal protein uL22 family. Part of the 50S ribosomal subunit.

Its function is as follows. This protein binds specifically to 23S rRNA; its binding is stimulated by other ribosomal proteins, e.g. L4, L17, and L20. It is important during the early stages of 50S assembly. It makes multiple contacts with different domains of the 23S rRNA in the assembled 50S subunit and ribosome. In terms of biological role, the globular domain of the protein is located near the polypeptide exit tunnel on the outside of the subunit, while an extended beta-hairpin is found that lines the wall of the exit tunnel in the center of the 70S ribosome. The protein is Large ribosomal subunit protein uL22 of Streptococcus uberis (strain ATCC BAA-854 / 0140J).